The primary structure comprises 385 residues: Putative actin-25 (385 aa).

The protein belongs to the actin family.

It localises to the cytoplasm. The protein resides in the cytoskeleton. The catalysed reaction is ATP + H2O = ADP + phosphate + H(+). Actins are highly conserved proteins that are involved in various types of cell motility and are ubiquitously expressed in all eukaryotic cells. Multiple isoforms are involved in various cellular functions such as cytoskeleton structure, cell mobility, chromosome movement and muscle contraction. In Dictyostelium discoideum (Social amoeba), this protein is Putative actin-25 (act25).